A 720-amino-acid chain; its full sequence is Polyribonucleotide nucleotidyltransferase (720 aa).

2 residues coordinate Mg(2+): aspartate 487 and aspartate 493. Positions 554–613 (PRITTISIPKEKIREVIGTGGKVIREICEQTGAKIDIDDDGTIKVASVDADAAQRAIDWI) constitute a KH domain. The region spanning 623–691 (GVIYNGKVVK…DRGKVKLSMK (69 aa)) is the S1 motif domain. The interval 695-720 (QTTGEDISAQLEAERAASKRERHHED) is disordered. Residues 706-720 (EAERAASKRERHHED) are compositionally biased toward basic and acidic residues.

Belongs to the polyribonucleotide nucleotidyltransferase family. Mg(2+) is required as a cofactor.

It localises to the cytoplasm. It carries out the reaction RNA(n+1) + phosphate = RNA(n) + a ribonucleoside 5'-diphosphate. Its function is as follows. Involved in mRNA degradation. Catalyzes the phosphorolysis of single-stranded polyribonucleotides processively in the 3'- to 5'-direction. The chain is Polyribonucleotide nucleotidyltransferase from Paramagnetospirillum magneticum (strain ATCC 700264 / AMB-1) (Magnetospirillum magneticum).